The chain runs to 221 residues: uncharacterized protein (221 aa).

It localises to the mitochondrion. This is an uncharacterized protein from Paramecium tetraurelia.